The primary structure comprises 437 residues: MADDPSAADRNVEIWKIKKLIKSLEAARGNGTSMISLIIPPKDQISRVAKMLADEFGTASNIKSRVNRLSVLGAITSVQQRLKLYNKVPPNGLVVYCGTIVTEEGKEKKVNIDFEPFKPINTSLYLCDNKFHTEALTALLSDDSKFGFIVIDGSGALFGTLQGNTREVLHKFTVDLPKKHGRGGQSALRFARLRMEKRHNYVRKVAETAVQLFISGDKVNVAGLVLAGSADFKTELSQSDMFDQRLQSKVLKLVDISYGGENGFNQAIELSTEVLSNVKFIQEKKLIGRYFDEISQDTGKYCFGVEDTLKALEMGAVEILIVYENLDIMRYVLRCNGSEEEKTLYLTPEQEKDKSHFIDKETGQEHELIESMPLLEWFANNYKKFGATLEIVTDKSQEGSQFVKGFGGIGGILRYRVDFQGMEYQGGDDEFFDLDDY.

The NIKS motif; plays an important role in translational termination motif lies at 61 to 64 (NIKS).

It belongs to the eukaryotic release factor 1 family. In terms of assembly, component of the eRF1-eRF3-GTP ternary complex, composed of ETF1/ERF1 and eRF3 (GSPT1/ERF3A or GSPT2/ERF3B) and GTP.

Its subcellular location is the cytoplasm. Functionally, component of the eRF1-eRF3-GTP ternary complex, a ternary complex that mediates translation termination in response to the termination codons. The eRF1-eRF3-GTP complex binds to a stop codon in the ribosomal A-site. ETF1/ERF1 is responsible for stop codon recognition and inducing hydrolysis of peptidyl-tRNA. Following GTP hydrolysis, eRF3 (GSPT1/ERF3A or GSPT2/ERF3B) dissociates, permitting ETF1/eRF1 to accommodate fully in the A-site, followed by hydrolysis of peptidyl-tRNA. This is Eukaryotic peptide chain release factor subunit 1 (etf1) from Xenopus tropicalis (Western clawed frog).